The chain runs to 189 residues: MKCWTLGDRVLAVSMGDLTKVRAEAVVNPANSLMIMGGGAAGALKRAGGSVIEEEAMRKAPVPVGEAVITSGGSLPARFVIHAPTMEEPGMRIPLVNAFKASYAALRLASEAGIESVAMPAMGAGVGGLSVAEVAREAAMAASILRGKWPRYIILVARGEEAYRGMEKGVREALGVEGGECPADLARLV.

A Macro domain is found at 1–174 (MKCWTLGDRV…GMEKGVREAL (174 aa)).

This is an uncharacterized protein from Aeropyrum pernix (strain ATCC 700893 / DSM 11879 / JCM 9820 / NBRC 100138 / K1).